A 347-amino-acid polypeptide reads, in one-letter code: F-box protein At2g14500 (347 aa).

The F-box domain maps to 6 to 52 (PLTLSELPHDLLRNIFNRLSFADFHRATWNSISKQTAPPKTKSPWLI).

This Arabidopsis thaliana (Mouse-ear cress) protein is F-box protein At2g14500.